We begin with the raw amino-acid sequence, 180 residues long: p-cumate 2,3-dioxygenase system, small oxygenase component (180 aa).

This sequence belongs to the bacterial ring-hydroxylating dioxygenase beta subunit family. As to quaternary structure, the p-cumate 2,3-dioxygenase multicomponent enzyme system is composed of an electron transfer component and a dioxygenase component (iron sulfur protein (ISP)). The electron transfer component is composed of a ferredoxin reductase (CmtAa) and a ferredoxin (CmtAd), and the dioxygenase component is formed of a large alpha subunit (CmtAb) and a small beta subunit (CmtAc).

It functions in the pathway aromatic compound metabolism; p-cumate degradation; acetaldehyde and pyruvate from p-cumate. Component of the p-cumate 2,3-dioxygenase multicomponent enzyme system which catalyzes the incorporation of both atoms of molecular oxygen into p-cumate to form cis-2,3-dihydroxy-2,3-dihydro-p-cumate. The beta subunit seems to have a structural role in the holoenzyme. Also able to catalyze the cis-dihydroxylation of indole-2-carboxylate and indole-3-carboxylate. The polypeptide is p-cumate 2,3-dioxygenase system, small oxygenase component (Pseudomonas putida (Arthrobacter siderocapsulatus)).